A 463-amino-acid polypeptide reads, in one-letter code: Argininosuccinate lyase (463 aa).

This sequence belongs to the lyase 1 family. Argininosuccinate lyase subfamily.

The protein localises to the cytoplasm. The catalysed reaction is 2-(N(omega)-L-arginino)succinate = fumarate + L-arginine. Its pathway is amino-acid biosynthesis; L-arginine biosynthesis; L-arginine from L-ornithine and carbamoyl phosphate: step 3/3. The sequence is that of Argininosuccinate lyase from Methylorubrum extorquens (strain CM4 / NCIMB 13688) (Methylobacterium extorquens).